The sequence spans 205 residues: Thymidylate kinase (205 aa).

11–18 (GVEGSGKS) provides a ligand contact to ATP.

It belongs to the thymidylate kinase family.

It catalyses the reaction dTMP + ATP = dTDP + ADP. Phosphorylation of dTMP to form dTDP in both de novo and salvage pathways of dTTP synthesis. The protein is Thymidylate kinase of Ruthia magnifica subsp. Calyptogena magnifica.